A 627-amino-acid polypeptide reads, in one-letter code: Pescadillo homolog (627 aa).

The 94-residue stretch at 321–414 folds into the BRCT domain; that stretch reads RLRTLFKGLK…QLLPTNKYFI (94 aa). 3 disordered regions span residues 450–469, 488–566, and 595–627; these read HAQSDDDSEDEAQEEEETVD, YKKY…MVKP, and TIEASEKEARKTAKREARKEAAAAAAKASKLGK. A phosphoserine mark is found at serine 453 and serine 457. 2 stretches are compositionally biased toward acidic residues: residues 454-469 and 497-521; these read DDDSEDEAQEEEETVD and VNEDEEDPEDEDDNEDDDEEEEELD. Basic and acidic residues predominate over residues 522–533; sequence EKTKRLQEEKQK. Over residues 540–549 the composition is skewed to basic residues; that stretch reads KVHKVNKRQV. Composition is skewed to basic and acidic residues over residues 550–559 and 595–615; these read HKAEVDEHRL and TIEASEKEARKTAKREARKEA. A coiled-coil region spans residues 582–625; the sequence is KEKEEWLLRKKRRTIEASEKEARKTAKREARKEAAAAAAKASKL. Positions 616-627 are enriched in low complexity; the sequence is AAAAAKASKLGK.

Belongs to the pescadillo family.

The protein resides in the nucleus. It localises to the nucleolus. The protein localises to the nucleoplasm. Functionally, required for maturation of ribosomal RNAs and formation of the large ribosomal subunit. The chain is Pescadillo homolog from Drosophila simulans (Fruit fly).